Here is a 95-residue protein sequence, read N- to C-terminus: Large ribosomal subunit protein bL25 (95 aa).

This sequence belongs to the bacterial ribosomal protein bL25 family. As to quaternary structure, part of the 50S ribosomal subunit; part of the 5S rRNA/L5/L18/L25 subcomplex. Contacts the 5S rRNA. Binds to the 5S rRNA independently of L5 and L18.

In terms of biological role, this is one of the proteins that binds to the 5S RNA in the ribosome where it forms part of the central protuberance. The polypeptide is Large ribosomal subunit protein bL25 (Chromobacterium violaceum (strain ATCC 12472 / DSM 30191 / JCM 1249 / CCUG 213 / NBRC 12614 / NCIMB 9131 / NCTC 9757 / MK)).